Reading from the N-terminus, the 118-residue chain is Holo-[acyl-carrier-protein] synthase (118 aa).

Positions 8 and 57 each coordinate Mg(2+).

This sequence belongs to the P-Pant transferase superfamily. AcpS family. Requires Mg(2+) as cofactor.

Its subcellular location is the cytoplasm. The enzyme catalyses apo-[ACP] + CoA = holo-[ACP] + adenosine 3',5'-bisphosphate + H(+). Its function is as follows. Transfers the 4'-phosphopantetheine moiety from coenzyme A to a Ser of acyl-carrier-protein. In Acholeplasma laidlawii (strain PG-8A), this protein is Holo-[acyl-carrier-protein] synthase.